The following is a 328-amino-acid chain: Beta-ketoacyl-[acyl-carrier-protein] synthase III (328 aa).

Catalysis depends on residues Cys-122 and His-255. The interval 256 to 260 (QANVR) is ACP-binding. Residue Asn-285 is part of the active site.

The protein belongs to the thiolase-like superfamily. FabH family. Homodimer.

Its subcellular location is the cytoplasm. It catalyses the reaction malonyl-[ACP] + acetyl-CoA + H(+) = 3-oxobutanoyl-[ACP] + CO2 + CoA. The protein operates within lipid metabolism; fatty acid biosynthesis. Its function is as follows. Catalyzes the condensation reaction of fatty acid synthesis by the addition to an acyl acceptor of two carbons from malonyl-ACP. Catalyzes the first condensation reaction which initiates fatty acid synthesis and may therefore play a role in governing the total rate of fatty acid production. Possesses both acetoacetyl-ACP synthase and acetyl transacylase activities. Its substrate specificity determines the biosynthesis of branched-chain and/or straight-chain of fatty acids. The protein is Beta-ketoacyl-[acyl-carrier-protein] synthase III of Bordetella pertussis (strain Tohama I / ATCC BAA-589 / NCTC 13251).